Here is a 143-residue protein sequence, read N- to C-terminus: Large ribosomal subunit protein uL13 (143 aa).

This sequence belongs to the universal ribosomal protein uL13 family. In terms of assembly, part of the 50S ribosomal subunit.

Functionally, this protein is one of the early assembly proteins of the 50S ribosomal subunit, although it is not seen to bind rRNA by itself. It is important during the early stages of 50S assembly. The chain is Large ribosomal subunit protein uL13 from Dehalococcoides mccartyi (strain ATCC BAA-2266 / KCTC 15142 / 195) (Dehalococcoides ethenogenes (strain 195)).